Here is a 576-residue protein sequence, read N- to C-terminus: Proline--tRNA ligase (576 aa).

Belongs to the class-II aminoacyl-tRNA synthetase family. ProS type 1 subfamily. Homodimer.

Its subcellular location is the cytoplasm. It carries out the reaction tRNA(Pro) + L-proline + ATP = L-prolyl-tRNA(Pro) + AMP + diphosphate. In terms of biological role, catalyzes the attachment of proline to tRNA(Pro) in a two-step reaction: proline is first activated by ATP to form Pro-AMP and then transferred to the acceptor end of tRNA(Pro). As ProRS can inadvertently accommodate and process non-cognate amino acids such as alanine and cysteine, to avoid such errors it has two additional distinct editing activities against alanine. One activity is designated as 'pretransfer' editing and involves the tRNA(Pro)-independent hydrolysis of activated Ala-AMP. The other activity is designated 'posttransfer' editing and involves deacylation of mischarged Ala-tRNA(Pro). The misacylated Cys-tRNA(Pro) is not edited by ProRS. The sequence is that of Proline--tRNA ligase from Bordetella bronchiseptica (strain ATCC BAA-588 / NCTC 13252 / RB50) (Alcaligenes bronchisepticus).